A 586-amino-acid chain; its full sequence is A-type ATP synthase subunit A (586 aa).

232-239 lines the ATP pocket; that stretch reads GPFGSGKT.

The protein belongs to the ATPase alpha/beta chains family. In terms of assembly, has multiple subunits with at least A(3), B(3), C, D, E, F, H, I and proteolipid K(x).

The protein resides in the cell membrane. It carries out the reaction ATP + H2O + 4 H(+)(in) = ADP + phosphate + 5 H(+)(out). Functionally, component of the A-type ATP synthase that produces ATP from ADP in the presence of a proton gradient across the membrane. The A chain is the catalytic subunit. The chain is A-type ATP synthase subunit A from Methanococcus vannielii (strain ATCC 35089 / DSM 1224 / JCM 13029 / OCM 148 / SB).